Reading from the N-terminus, the 529-residue chain is Bifunctional purine biosynthesis protein PurH (529 aa).

The region spanning 2 to 149 is the MGS-like domain; it reads TDLSPVRRAL…KNHAFVNVVV (148 aa).

The protein belongs to the PurH family.

The catalysed reaction is (6R)-10-formyltetrahydrofolate + 5-amino-1-(5-phospho-beta-D-ribosyl)imidazole-4-carboxamide = 5-formamido-1-(5-phospho-D-ribosyl)imidazole-4-carboxamide + (6S)-5,6,7,8-tetrahydrofolate. The enzyme catalyses IMP + H2O = 5-formamido-1-(5-phospho-D-ribosyl)imidazole-4-carboxamide. Its pathway is purine metabolism; IMP biosynthesis via de novo pathway; 5-formamido-1-(5-phospho-D-ribosyl)imidazole-4-carboxamide from 5-amino-1-(5-phospho-D-ribosyl)imidazole-4-carboxamide (10-formyl THF route): step 1/1. It participates in purine metabolism; IMP biosynthesis via de novo pathway; IMP from 5-formamido-1-(5-phospho-D-ribosyl)imidazole-4-carboxamide: step 1/1. In Ruegeria pomeroyi (strain ATCC 700808 / DSM 15171 / DSS-3) (Silicibacter pomeroyi), this protein is Bifunctional purine biosynthesis protein PurH.